Consider the following 337-residue polypeptide: SH3 and cysteine-rich domain-containing protein 3 (337 aa).

Positions 1–11 (MFKKKAKEEKP) are enriched in basic and acidic residues. Disordered regions lie at residues 1-61 (MFKK…KPHK) and 162-215 (NKER…NKKA). Residues 35–48 (ESEEEEEEEEEEPP) are compositionally biased toward acidic residues. The segment at 59-110 (PHKFKDHYLKKPKFCDVCARMIVLNNKFGLRCKNCKTNIHHHCQSYVEFQKC) adopts a Phorbol-ester/DAG-type zinc-finger fold. 2 stretches are compositionally biased toward basic and acidic residues: residues 167–176 (KGQDDKKNPM) and 184–212 (LPPK…DAKN). SH3 domains lie at 220-279 (MQSH…RVRA) and 280-337 (AERV…LQEI).

In terms of assembly, component of a calcium channel complex with CACNA1S.

The protein resides in the cytoplasm. Its subcellular location is the cell membrane. It is found in the sarcolemma. The protein localises to the T-tubule. Required for normal excitation-contraction coupling in skeletal muscle and for normal muscle contraction in response to membrane depolarization. Required for normal Ca(2+) release from the sarcplasmic reticulum, which ultimately leads to muscle contraction. Probably functions via its effects on muscle calcium channels. Increases CACNA1S channel activity, in addition to its role in enhancing the expression of CACNA1S at the cell membrane. Has a redundant role in promoting the expression of the calcium channel CACNA1S at the cell membrane. This Xenopus tropicalis (Western clawed frog) protein is SH3 and cysteine-rich domain-containing protein 3 (stac3).